A 296-amino-acid chain; its full sequence is Protease HtpX homolog (296 aa).

Transmembrane regions (helical) follow at residues 14 to 34 and 38 to 58; these read VFLLIGFLALVGIVGAAVGYL and SLVTGIIGALLVGVIYAVIMI. Histidine 144 is a binding site for Zn(2+). The active site involves glutamate 145. Histidine 148 lines the Zn(2+) pocket. 2 helical membrane-spanning segments follow: residues 159 to 179 and 198 to 218; these read IALALTAAISFLINLGSNWWL and LLVFILSLVVMIFAPLVAAVI. Glutamate 227 provides a ligand contact to Zn(2+).

It belongs to the peptidase M48B family. It depends on Zn(2+) as a cofactor.

It is found in the cell membrane. In Leuconostoc citreum (strain KM20), this protein is Protease HtpX homolog.